The sequence spans 113 residues: U11-theraphotoxin-Hhn1l (113 aa).

The N-terminal stretch at 1 to 21 is a signal peptide; it reads MNTGRVTFLVVFLVAVSLGPA. A propeptide spanning residues 22 to 74 is cleaved from the precursor; that stretch reads DKEENPMEMQEKTQQGKNYLNFGENLVVPKLEELKAKLVEKESKKSKNSRQKR. Disulfide bonds link C82–C95 and C89–C110.

The protein belongs to the neurotoxin 14 (magi-1) family. 01 (HNTX-16) subfamily. In terms of tissue distribution, expressed by the venom gland.

The protein localises to the secreted. Functionally, probable ion channel inhibitor. The sequence is that of U11-theraphotoxin-Hhn1l from Cyriopagopus hainanus (Chinese bird spider).